Here is a 471-residue protein sequence, read N- to C-terminus: PE-PGRS family protein PE_PGRS33 (471 aa).

The tract at residues 1-30 is essential for translocation to the cell surface; sequence MSFVVTIPEALAAVATDLAGIGSTIGTANA. One can recognise a PE domain in the interval 1 to 93; the sequence is MSFVVTIPEA…AGSYAAAEAA (93 aa). Residues 140–230 form an interacts with TLR2 region; the sequence is GNGGAGGSGA…GLFFGVGGAG (91 aa).

Belongs to the mycobacterial PE family. PGRS subfamily. Interacts with human TLR2.

The protein localises to the secreted. Its subcellular location is the cell wall. It is found in the cell surface. The protein resides in the cell outer membrane. Functionally, induces TNF-alpha release through human Toll-like receptor 2 (TLR2) signaling pathway, leading to macrophage apoptosis. In Mycobacterium tuberculosis (strain CDC 1551 / Oshkosh), this protein is PE-PGRS family protein PE_PGRS33 (PE_PGRS33).